Here is a 119-residue protein sequence, read N- to C-terminus: UPF0342 protein GK0640 (119 aa).

This sequence belongs to the UPF0342 family.

This Geobacillus kaustophilus (strain HTA426) protein is UPF0342 protein GK0640.